A 73-amino-acid chain; its full sequence is ATP synthase subunit c (73 aa).

2 helical membrane-spanning segments follow: residues 4 to 24 (LAIG…GIGI) and 51 to 71 (GALA…IIIF).

It belongs to the ATPase C chain family. As to quaternary structure, F-type ATPases have 2 components, F(1) - the catalytic core - and F(0) - the membrane proton channel. F(1) has five subunits: alpha(3), beta(3), gamma(1), delta(1), epsilon(1). F(0) has three main subunits: a(1), b(2) and c(10-14). The alpha and beta chains form an alternating ring which encloses part of the gamma chain. F(1) is attached to F(0) by a central stalk formed by the gamma and epsilon chains, while a peripheral stalk is formed by the delta and b chains.

It is found in the cell membrane. In terms of biological role, f(1)F(0) ATP synthase produces ATP from ADP in the presence of a proton or sodium gradient. F-type ATPases consist of two structural domains, F(1) containing the extramembraneous catalytic core and F(0) containing the membrane proton channel, linked together by a central stalk and a peripheral stalk. During catalysis, ATP synthesis in the catalytic domain of F(1) is coupled via a rotary mechanism of the central stalk subunits to proton translocation. Key component of the F(0) channel; it plays a direct role in translocation across the membrane. A homomeric c-ring of between 10-14 subunits forms the central stalk rotor element with the F(1) delta and epsilon subunits. The chain is ATP synthase subunit c from Caldanaerobacter subterraneus subsp. tengcongensis (strain DSM 15242 / JCM 11007 / NBRC 100824 / MB4) (Thermoanaerobacter tengcongensis).